We begin with the raw amino-acid sequence, 447 residues long: uncharacterized protein (447 aa).

Cys87, Cys93, Cys96, and Cys162 together coordinate [4Fe-4S] cluster. Gln284, Tyr313, Glu334, and Asp375 together coordinate S-adenosyl-L-methionine. The active-site Nucleophile is the Cys402.

It belongs to the class I-like SAM-binding methyltransferase superfamily. RNA M5U methyltransferase family.

This is an uncharacterized protein from Nanoarchaeum equitans (strain Kin4-M).